The following is a 429-amino-acid chain: MEYSDVPKFIRDVSIKQHEWMRESIKLIASENITSLAVREACATDFMHRYAEGLPGKRLYQGCKYIDEVETLCIELSKELFKAEHANVQPTSGVVANLAVFFAETKPGDKLMALSVPDGGHISHWKVSAAGIRGLKVINHPFDPEEMNIDADAMVKKILEEKPKLILFGGSLFPFPHPVADAYEAAQEVGAKIAYDGAHVLGLIAGKQFQDPLREGAEYLMGSTHKTFFGPQGGVILTTKENADKIDSHVFPGVVSNHHLHHKAGLAIALAEMLEFGEAYAKQVIKNAKALAQALYERGFNVLCEHKDFTESHQVIIDIESSPDIEFSASELAKMYEEANIILNKNLLPWDDVNNSDNPSGIRLGTQECTRLGMKEKEMEEIAEFMKRIAIDKEKPEKVREDVKEFAKEYSTIHYSFDEGDGFKYLRFY.

120–122 (GHI) serves as a coordination point for (6S)-5,6,7,8-tetrahydrofolate. Lys226 is modified (N6-(pyridoxal phosphate)lysine).

This sequence belongs to the SHMT family. In terms of assembly, homodimer. It depends on pyridoxal 5'-phosphate as a cofactor.

Its subcellular location is the cytoplasm. The catalysed reaction is 5,10-methylenetetrahydromethanopterin + glycine + H2O = 5,6,7,8-tetrahydromethanopterin + L-serine. It carries out the reaction L-allo-threonine = acetaldehyde + glycine. Its pathway is amino-acid biosynthesis; glycine biosynthesis; glycine from L-serine: step 1/1. Catalyzes the reversible interconversion of serine and glycine with tetrahydromethanopterin (H4MPT) serving as the one-carbon carrier. The use of tetrahydrofolate (THF or H4PteGlu) as the pteridine substrate is 450-fold less efficient than that of H4MPT. Also exhibits a pteridine-independent aldolase activity toward beta-hydroxyamino acids, producing glycine and aldehydes, via a retro-aldol mechanism. Thus, is able to catalyze the cleavage of L-allo-threonine and L-threo-beta-phenylserine. This chain is Serine hydroxymethyltransferase, found in Methanocaldococcus jannaschii (strain ATCC 43067 / DSM 2661 / JAL-1 / JCM 10045 / NBRC 100440) (Methanococcus jannaschii).